The primary structure comprises 176 residues: Disulfide bond formation protein B (176 aa).

Residues 1–13 (MQFLNTFSKSRIS) are Cytoplasmic-facing. A helical transmembrane segment spans residues 14-30 (WLLLLLCIVFFEGSALF). Residues 31–48 (FQHGMKLGPCVMCIYERV) are Periplasmic-facing. Cysteine 40 and cysteine 43 are disulfide-bonded. Residues 49–64 (AMMGIAFAALLGAIAP) traverse the membrane as a helical segment. The Cytoplasmic portion of the chain corresponds to 65–71 (QYAIIRW). Residues 72-89 (AGLIAWGYSAVRGLQLSI) form a helical membrane-spanning segment. The Periplasmic portion of the chain corresponds to 90 to 144 (EHVGYQFNPSPFATCDLFVQFPNWAPLNKWVPWMFEAYGNCAEVVWTFLGQSMPQ). A disulfide bridge connects residues cysteine 104 and cysteine 130. A helical membrane pass occupies residues 145–163 (WLVIIFAGNLVALALIVIA). At 164–176 (QFFSKKTNTILDM) the chain is on the cytoplasmic side.

This sequence belongs to the DsbB family.

The protein localises to the cell inner membrane. Its function is as follows. Required for disulfide bond formation in some periplasmic proteins. Acts by oxidizing the DsbA protein. In Photobacterium profundum (strain SS9), this protein is Disulfide bond formation protein B.